Here is a 162-residue protein sequence, read N- to C-terminus: Caveolin-2 (162 aa).

Residues 1–86 (MGLETEKADV…FEMSKYVIYK (86 aa)) are Cytoplasmic-facing. At Tyr-19 the chain carries Phosphotyrosine; by SRC. A phosphoserine mark is found at Ser-20 and Ser-23. Tyr-27 is subject to Phosphotyrosine; by SRC. The helical intramembrane region spans 87-107 (FLTVFLAIPLAFAAGILFATL). Residues 108-162 (SCLHIWIIMPFVKTCLMVLPSVQTIWKSVTDVVIAPLCTSVGRSFSSVSLQLSHD) are Cytoplasmic-facing.

It belongs to the caveolin family. In terms of assembly, monomer or homodimer. Interacts with CAV1; the interaction forms a stable heterooligomeric complex that is required for targeting to lipid rafts and for caveolae formation. Tyrosine phosphorylated forms do not form heterooligomers with the Tyr-19-phosphorylated form existing as a monomer or dimer, and the Tyr-27-form as a monomer only. Interacts (tyrosine phosphorylated form) with the SH2 domain-containing proteins, RASA1, NCK1 and SRC. Interacts (tyrosine phosphorylated form) with INSR, the interaction (Tyr-27-phosphorylated form) is increased on insulin stimulation. Interacts (Tyr-19 phosphorylated form) with MAPK1 (phosphorylated form); the interaction, promoted by insulin, leads to nuclear location and MAPK1 activation. Interacts with STAT3; the interaction is increased on insulin-induced tyrosine phosphorylation leading to STAT activation. Post-translationally, phosphorylated on serine and tyrosine residues. CAV1 promotes phosphorylation on Ser-23 which then targets the complex to the plasma membrane, lipid rafts and caveolae. Phosphorylation on both Tyr-19 and Tyr-27 is required for insulin-induced 'Ser-727' phosphorylation of STAT3 and its activation. Phosphorylation on Tyr-19 is required for insulin-induced phosphorylation of MAPK1 and DNA binding of STAT3. Tyrosine phosphorylation is induced by both EGF and insulin.

The protein localises to the nucleus. Its subcellular location is the cytoplasm. It is found in the golgi apparatus membrane. It localises to the cell membrane. The protein resides in the membrane. The protein localises to the caveola. In terms of biological role, may act as a scaffolding protein within caveolar membranes. Interacts directly with G-protein alpha subunits and can functionally regulate their activity. Acts as an accessory protein in conjunction with CAV1 in targeting to lipid rafts and driving caveolae formation. Positive regulator of cellular mitogenesis of the MAPK signaling pathway. Required for the insulin-stimulated nuclear translocation and activation of MAPK1 and STAT3, and the subsequent regulation of cell cycle progression. This is Caveolin-2 (CAV2) from Muntiacus muntjak (Barking deer).